A 151-amino-acid polypeptide reads, in one-letter code: Neuroglobin (151 aa).

The region spanning 1–149 (MERPEPELIR…VVQAMSRGWD (149 aa)) is the Globin domain. Residues His-64 and His-96 each contribute to the heme b site.

It belongs to the globin family. Monomer. Homodimer and homotetramer; disulfide-linked. Mainly monomeric but also detected as part of homodimers and homotetramers. Interacts with 14-3-3 proteins; regulates the phosphorylation of NGB. Could interact (ferrous form) with G-alpha(i) proteins (GTP-bound form). Phosphorylated during hypoxia by ERK1/ERK2. Phosphorylation regulates the heme pocket hexacoordination preventing the association of His-64 with the heme metal center. Thereby, promotes the access of dioxygen and nitrite to the heme and stimulates the nitrite reductase activity. Phosphorylation during hypoxia is stabilized by 14-3-3 proteins.

Its subcellular location is the cytoplasm. It is found in the cytosol. The protein localises to the mitochondrion matrix. The enzyme catalyses Fe(III)-heme b-[protein] + nitric oxide + H2O = Fe(II)-heme b-[protein] + nitrite + 2 H(+). Its function is as follows. Monomeric globin with a bis-histidyl six-coordinate heme-iron atom through which it can bind dioxygen, carbon monoxide and nitric oxide. Could help transport oxygen and increase its availability to the metabolically active neuronal tissues, though its low quantity in tissues as well as its high affinity for dioxygen, which may limit its oxygen-releasing ability, argue against it. The ferrous/deoxygenated form exhibits a nitrite reductase activity and it could produce nitric oxide which in turn inhibits cellular respiration in response to hypoxia. In its ferrous/deoxygenated state, it may also exhibit GDI (Guanine nucleotide Dissociation Inhibitor) activity toward heterotrimeric G-alpha proteins, thereby regulating signal transduction to facilitate neuroprotective responses in the wake of hypoxia and associated oxidative stress. The chain is Neuroglobin from Macaca mulatta (Rhesus macaque).